The sequence spans 123 residues: Ribosome-binding factor A (123 aa).

This sequence belongs to the RbfA family. In terms of assembly, monomer. Binds 30S ribosomal subunits, but not 50S ribosomal subunits or 70S ribosomes.

The protein resides in the cytoplasm. Functionally, one of several proteins that assist in the late maturation steps of the functional core of the 30S ribosomal subunit. Associates with free 30S ribosomal subunits (but not with 30S subunits that are part of 70S ribosomes or polysomes). Required for efficient processing of 16S rRNA. May interact with the 5'-terminal helix region of 16S rRNA. This chain is Ribosome-binding factor A, found in Koribacter versatilis (strain Ellin345).